The chain runs to 159 residues: Cell division protein SepF (159 aa).

Residues 23-69 (DYIEEDEEQKPASKSAFDSDHTVTPLASTTAPAASSTTKPFPGGRVN) form a disordered region. Low complexity predominate over residues 44–64 (TVTPLASTTAPAASSTTKPFP).

Belongs to the SepF family. In terms of assembly, homodimer. Interacts with FtsZ.

Its subcellular location is the cytoplasm. In terms of biological role, cell division protein that is part of the divisome complex and is recruited early to the Z-ring. Probably stimulates Z-ring formation, perhaps through the cross-linking of FtsZ protofilaments. Its function overlaps with FtsA. In Bifidobacterium longum (strain DJO10A), this protein is Cell division protein SepF.